Consider the following 379-residue polypeptide: Junctional adhesion molecule-like (379 aa).

A signal peptide spans 1-20; the sequence is MLCLLKLIVIPVILAPVGYP. The Extracellular portion of the chain corresponds to 21-281; it reads QGLPGLTVSS…QQGILNGNQL (261 aa). 2 consecutive Ig-like V-type domains span residues 24–135 and 140–250; these read PGLT…KPVE and PEEP…KTIV. A disulfide bond links Cys-45 and Cys-119. N-linked (GlcNAc...) asparagine glycans are attached at residues Asn-79, Asn-89, and Asn-125. A disulfide bond links Cys-158 and Cys-236. A helical membrane pass occupies residues 282 to 302; sequence VIIVGIVCATFLLLPVLILIV. The Cytoplasmic portion of the chain corresponds to 303 to 379; that stretch reads KKAKWNKSSV…SLVRSSVRSK (77 aa). At Tyr-355 the chain carries Phosphotyrosine.

This sequence belongs to the immunoglobulin superfamily. In terms of assembly, homodimer; active form in leukocyte-endothelial cell adhesion. Interacts (homodimeric form) with CXADR. Interacts (via cytoplasmic domain) with the PI3 kinase; upon CXADR-binding. Interacts with ITGA4 and ITGB1; integrin alpha-4/beta-1 may regulate leukocyte to endothelial cells adhesion by controlling JAML homodimerization. In terms of tissue distribution, expressed by gamma-delta intraepithelial T cells (at protein level).

It is found in the cell membrane. The protein localises to the cell junction. Its function is as follows. Transmembrane protein of the plasma membrane of leukocytes that control their migration and activation through interaction with CXADR, a plasma membrane receptor found on adjacent epithelial and endothelial cells. The interaction between both receptors mediates the activation of gamma-delta T-cells, a subpopulation of T-cells residing in epithelia and involved in tissue homeostasis and repair. Upon epithelial CXADR-binding, JAML induces downstream cell signaling events in gamma-delta T-cells through PI3-kinase and MAP kinases. It results in proliferation and production of cytokines and growth factors by T-cells that in turn stimulate epithelial tissues repair. It also controls the transmigration of leukocytes within epithelial and endothelial tissues through adhesive interactions with epithelial and endothelial CXADR. This Mus musculus (Mouse) protein is Junctional adhesion molecule-like.